We begin with the raw amino-acid sequence, 720 residues long: Cyclopenase penL (720 aa).

3 residues coordinate Cu cation: His137, His141, and His313.

The protein belongs to the tyrosinase family. The cofactor is Cu(2+).

It catalyses the reaction (-)-cyclopenine = viridicatin + methyl isocyanate + H(+). The catalysed reaction is (-)-4'-methoxycyclopenine = 4'-methoxyviridicatin + methyl isocyanate + H(+). It functions in the pathway secondary metabolite biosynthesis. The protein operates within alkaloid biosynthesis. Its pathway is mycotoxin biosynthesis. Its function is as follows. Cyclopenase; part of the gene cluster that mediates the biosynthesis of penigequinolones, potent insecticidal alkaloids that contain a highly modified 10-carbon prenyl group. The first stage is catalyzed by the nonribosomal peptide synthetase penN that condenses anthranilic acid and O-methyl-L-tyrosine to produce 4'-methoxycyclopeptin. 4'-methoxycyclopeptin is then converted to 4'-methoxydehydrocyclopeptin by the ketoglutarate-dependent dioxygenase penM through dehydrogenation to form a double bond between C-alpha and C-beta of the O-methyltyrosine side chain. PenM also converts its first product methoxydehydrocyclopeptin to 4'-methoxycyclopenin. The following conversion of 4'methoxycyclopenin into 4'-methoxyviridicatin is catalyzed by the cyclopenase penL. 4'-methoxyviridicatin is the precursor of quinolone natural products, and is further converted to quinolinone B. The prenyltransferase penI then catalyzes the canonical Friedel-Crafts alkylation of quinolinone B with dimethylallyl cation to yield dimethylallyl quinolone, which is subjected to FAD-dependent dehydrogenation by the FAD-linked oxidoreductase penH to yield conjugated aryl diene. The delta(3') double bond then serves as the site of the second alkylation with DMAPP catalyzed by the prenyltransferase penG to yield a carbenium ion intermediate, which can be attacked by H(2)O to yield a styrenyl quinolone containing a C3'-hydroxyprenyl chain, or undergo cyclization to yield yaequinolones J1 and J2. The conversion of the styrenyl quinolone into the tetrahydrofuran-containing yaequinolone C is performed by the FAD-dependent monooxygenase penE and involves epoxidation of the terminal C7'-C8' olefin, followed by epoxide ring opening initiated by the C3' hydroxyl group. The predicted cysteine hydrolase penJ acts as an epoxide hydrolase that enhances the rate of the 5-exo-tet cyclization step, increasing the yield of yaequinolone C. PenF catalyzes the cationic rearrangement of the epoxide formed by penE (before ring opening to produce yaequinolone C) into yaequinolone D. Finally, the short-chain dehydrogenase/reductase (SDR)-like reductase penD, catalyzes both the dehydration of yaequinolone D and the reduction of the resulting oxonium to yield penigequinolone. The protein is Cyclopenase penL of Penicillium thymicola.